The primary structure comprises 326 residues: Eukaryotic translation initiation factor 2 subunit 1 (326 aa).

Residues 24-95 (DDLIMVKVNR…QKGYIDLSKR (72 aa)) form the S1 motif domain. The residue at position 59 (S59) is a Phosphoserine; by eIK1, eIK2 and PK4. A disordered region spans residues 291 to 326 (LDKHDGLSSDDEYSSDGDEDDSSNDDDNSSDEDDDD). A compositionally biased stretch (acidic residues) spans 298–326 (SSDDEYSSDGDEDDSSNDDDNSSDEDDDD).

Belongs to the eIF-2-alpha family. In terms of processing, phosphorylates at Ser-59 in mature trophozoites, schizonts and gametocytes but not in rings and young trophozoites. Phosphorylates at Ser-59 by eIK2 in salivary gland sporozoites but not in midgut and hemocoel sporozoites. Dephosphorylated at Ser-59 by UIS2. Phosphorylation of eIF2alpha subunit of the pre-initiation complex eIF2 inhibits recycling of inactive eIF2-GDP to active eIF2-GTP by limiting the activity of the guanine nucleotide exchange factor eIF2B and thus, inhibits protein translation.

Its subcellular location is the cytoplasm. It is found in the stress granule. Functions in the early steps of protein synthesis by forming a ternary complex with GTP and initiator tRNA. May regulate protein translation in response to amino acid starvation. May regulate protein at various stages of parasite development. This Plasmodium berghei (strain Anka) protein is Eukaryotic translation initiation factor 2 subunit 1.